Consider the following 198-residue polypeptide: Ras-related protein RabH (198 aa).

14–21 serves as a coordination point for GTP; sequence GDWNVGKS. Residues 36–44 carry the Effector region motif; that stretch reads TKLSMGEHF. Residues 62–66 and 120–123 each bind GTP; these read DTSGM and SKFD. Residue C195 is modified to Cysteine methyl ester. C195 carries S-geranylgeranyl cysteine lipidation. Residues 196-198 constitute a propeptide, removed in mature form; it reads SIN.

Belongs to the small GTPase superfamily. Rab family.

It is found in the cell membrane. The sequence is that of Ras-related protein RabH (rabH) from Dictyostelium discoideum (Social amoeba).